Consider the following 1214-residue polypeptide: Inner capsid protein VP3 (1214 aa).

Residues 1-80 form a disordered region; sequence MPRRSARKAQ…SVNNDGDIIT (80 aa). The span at 8–18 shows a compositional bias: polar residues; that stretch reads KAQSATASPAD. Positions 28–51 are enriched in low complexity; it reads PTTNSPPSTTSPNQAAADANQQQA. Residues 117-140 form a C2H2-type zinc finger; sequence YVCNVCNARFSTMSALSEHLRSDH.

Belongs to the turreted BTV-fold inner capsid family. Homodecamer; each decamer is made up of two conformers of VP2, called VP2A and VP2B. 12 homodecamers assemble to form an icosahedral capsid. Interacts with VP6.

It localises to the virion. Its function is as follows. Inner capsid protein that self-assembles to form an icosahedral capsid with a T=2 symmetry, which consists of 120 copies of VP2, with channels at each of its five-fold vertices. This capsid constitutes the innermost concentric layer of the viral mature particle. The protein is Inner capsid protein VP3 (S3) of Notemigonus crysoleucas (Golden shiner).